The sequence spans 201 residues: Probable GTP-binding protein EngB (201 aa).

The region spanning 23 to 196 (TGPEIALAGR…HEAVEEILSM (174 aa)) is the EngB-type G domain. Residues 31–38 (GRSNVGKS), 58–62 (GKTQM), 76–79 (DLPG), 143–146 (TKAD), and 175–177 (YSA) each bind GTP. Serine 38 and threonine 60 together coordinate Mg(2+).

Belongs to the TRAFAC class TrmE-Era-EngA-EngB-Septin-like GTPase superfamily. EngB GTPase family. Requires Mg(2+) as cofactor.

Its function is as follows. Necessary for normal cell division and for the maintenance of normal septation. The chain is Probable GTP-binding protein EngB from Desulfitobacterium hafniense (strain DSM 10664 / DCB-2).